A 402-amino-acid chain; its full sequence is uncharacterized protein (402 aa).

It to M.genitalium MG148.

This is an uncharacterized protein from Caldicellulosiruptor sp. (strain Rt8B.4).